Here is a 253-residue protein sequence, read N- to C-terminus: 4-phosphopantoate--beta-alanine ligase (253 aa).

Residues R17, R39, 179–181 (DLN), 185–186 (RT), and 197–198 (NL) contribute to the ATP site.

Belongs to the archaeal phosphopantothenate synthetase family. Homodimer.

The catalysed reaction is (R)-4-phosphopantoate + beta-alanine + ATP = (R)-4'-phosphopantothenate + AMP + diphosphate + H(+). Its pathway is cofactor biosynthesis; coenzyme A biosynthesis. Functionally, catalyzes the condensation of (R)-4-phosphopantoate and beta-alanine to 4'-phosphopantothenate in the CoA biosynthesis pathway. The protein is 4-phosphopantoate--beta-alanine ligase of Methanosarcina mazei (strain ATCC BAA-159 / DSM 3647 / Goe1 / Go1 / JCM 11833 / OCM 88) (Methanosarcina frisia).